A 250-amino-acid chain; its full sequence is PHD finger protein ALFIN-LIKE 3 (250 aa).

N-acetylmethionine is present on Met-1. Positions 146 to 192 are disordered; it reads DKSSAANQNGNKSKSNSKVRTSEGKSSKTKQPKEEDEEIDEDDEDDH. The segment covering 149-163 has biased composition (low complexity); the sequence is SAANQNGNKSKSNSK. A compositionally biased stretch (acidic residues) spans 179–192; sequence EEDEEIDEDDEDDH. The segment at 194-246 adopts a PHD-type zinc-finger fold; that stretch reads ETLCGACGDSDGADEFWICCDLCEKWFHGKCVKITPARAEHIKQYKCPSCSNK.

Belongs to the Alfin family. In terms of tissue distribution, ubiquitously expressed.

It is found in the nucleus. Functionally, histone-binding component that specifically recognizes H3 tails trimethylated on 'Lys-4' (H3K4me3), which mark transcription start sites of virtually all active genes. In Arabidopsis thaliana (Mouse-ear cress), this protein is PHD finger protein ALFIN-LIKE 3 (AL3).